The sequence spans 427 residues: Serine--tRNA ligase (427 aa).

231 to 233 (TAE) provides a ligand contact to L-serine. Residue 262–264 (RSE) coordinates ATP. An L-serine-binding site is contributed by Glu285. 349–352 (EISS) provides a ligand contact to ATP. Position 385 (Ser385) interacts with L-serine.

This sequence belongs to the class-II aminoacyl-tRNA synthetase family. Type-1 seryl-tRNA synthetase subfamily. In terms of assembly, homodimer. The tRNA molecule binds across the dimer.

The protein resides in the cytoplasm. The enzyme catalyses tRNA(Ser) + L-serine + ATP = L-seryl-tRNA(Ser) + AMP + diphosphate + H(+). It carries out the reaction tRNA(Sec) + L-serine + ATP = L-seryl-tRNA(Sec) + AMP + diphosphate + H(+). The protein operates within aminoacyl-tRNA biosynthesis; selenocysteinyl-tRNA(Sec) biosynthesis; L-seryl-tRNA(Sec) from L-serine and tRNA(Sec): step 1/1. Its function is as follows. Catalyzes the attachment of serine to tRNA(Ser). Is also able to aminoacylate tRNA(Sec) with serine, to form the misacylated tRNA L-seryl-tRNA(Sec), which will be further converted into selenocysteinyl-tRNA(Sec). This Brucella melitensis biotype 2 (strain ATCC 23457) protein is Serine--tRNA ligase.